Consider the following 412-residue polypeptide: Histone-lysine N-methyltransferase SUV39H1 (412 aa).

Residues 1–89 are interaction with SIRT1; that stretch reads MAENLKGCSV…LKCIRVLKQF (89 aa). Positions 43–101 constitute a Chromo domain; that stretch reads FEVEYLCDYKKIREQEYYLVKWRGYPDSENTWEPRQNLKCIRVLKQFHKDLERELVRRH. Residues 179-240 form the Pre-SET domain; sequence VGCECQDCLL…DCPNRVVQKG (62 aa). Zn(2+) contacts are provided by Cys181, Cys183, Cys186, Cys194, Cys195, Cys222, Cys226, Cys228, and Cys232. In terms of domain architecture, SET spans 243-366; it reads YDLCIFRTND…AGEELTFDYN (124 aa). 254–256 lines the S-adenosyl-L-methionine pocket; that stretch reads RGW. Residues 255–377 are mediates interaction with MECOM; sequence GWGVRTLEKI…QVDPVDMEST (123 aa). Position 266 is an N6-acetyllysine (Lys266). Residues Tyr297 and 323–324 contribute to the S-adenosyl-L-methionine site; that span reads NH. Cys326 is a Zn(2+) binding site. Residue Ser391 is modified to Phosphoserine. One can recognise a Post-SET domain in the interval 396–412; sequence VRIECKCGTTACRKYLF. Positions 400, 402, and 407 each coordinate Zn(2+).

This sequence belongs to the class V-like SAM-binding methyltransferase superfamily. Histone-lysine methyltransferase family. Suvar3-9 subfamily. Interacts with CCAR2 and GFI1B. Component of the eNoSC complex, composed of SIRT1, SUV39H1 and RRP8. Interacts with H3 and H4 histones. Interacts with DNMT3B, CBX1, CBX4, MBD1, RUNX1, RUNX3, MYOD1, SMAD5 and RB1. Interacts with SBF1 through the SET domain. Interacts with HDAC1 and HDAC2 through the N-terminus and associates with the core histone deacetylase complex composed of HDAC1, HDAC2, RBBP4 and RBBP7. Interacts (via SET domain) with MECOM; enhances MECOM transcriptional repression activity. Interacts with LMNA; the interaction increases stability of SUV39H1. The large PER complex involved in the histone methylation is composed of at least PER2, CBX3, TRIM28, SUV39H1 and/or SUV39H2; CBX3 mediates the formation of the complex. Phosphorylated on serine residues, and to a lesser degree, on threonine residues. In terms of processing, acetylated at Lys-266, leading to inhibition of enzyme activity. SIRT1-mediated deacetylation relieves this inhibition. Post-translationally, ubiquitinated by the DCX(DCAF13) E3 ubiquitin ligase complex, leading to its degradation. Widely expressed.

Its subcellular location is the nucleus. The protein resides in the nucleus lamina. It is found in the nucleoplasm. The protein localises to the chromosome. It localises to the centromere. The enzyme catalyses L-lysyl(9)-[histone H3] + 3 S-adenosyl-L-methionine = N(6),N(6),N(6)-trimethyl-L-lysyl(9)-[histone H3] + 3 S-adenosyl-L-homocysteine + 3 H(+). Negatively regulated by CCAR2. Histone methyltransferase that specifically trimethylates 'Lys-9' of histone H3 using monomethylated H3 'Lys-9' as substrate. H3 'Lys-9' trimethylation represents a specific tag for epigenetic transcriptional repression by recruiting HP1 (CBX1, CBX3 and/or CBX5) proteins to methylated histones. Mainly functions in heterochromatin regions, thereby playing a central role in the establishment of constitutive heterochromatin at pericentric and telomere regions. H3 'Lys-9' trimethylation is also required to direct DNA methylation at pericentric repeats. SUV39H1 is targeted to histone H3 via its interaction with RB1 and is involved in many processes, such as repression of MYOD1-stimulated differentiation, regulation of the control switch for exiting the cell cycle and entering differentiation, repression by the PML-RARA fusion protein, BMP-induced repression, repression of switch recombination to IgA and regulation of telomere length. Component of the eNoSC (energy-dependent nucleolar silencing) complex, a complex that mediates silencing of rDNA in response to intracellular energy status and acts by recruiting histone-modifying enzymes. The eNoSC complex is able to sense the energy status of cell: upon glucose starvation, elevation of NAD(+)/NADP(+) ratio activates SIRT1, leading to histone H3 deacetylation followed by dimethylation of H3 at 'Lys-9' (H3K9me2) by SUV39H1 and the formation of silent chromatin in the rDNA locus. Recruited by the PER complex to the E-box elements of the circadian target genes such as PER2 itself or PER1, contributes to the conversion of local chromatin to a heterochromatin-like repressive state through H3 'Lys-9' trimethylation. In Mus musculus (Mouse), this protein is Histone-lysine N-methyltransferase SUV39H1 (Suv39h1).